The following is a 419-amino-acid chain: N-acylglucosamine 2-epimerase (419 aa).

Residues leucine 185–leucine 206 form a leucine-zipper region. Position 418 is a phosphoserine (serine 418).

It belongs to the N-acylglucosamine 2-epimerase family. As to quaternary structure, homodimer. Forms a heterodimer with renin and inhibits its activity. As to expression, kidney, adrenal gland, brain, lung, spleen, ovary, testis and heart.

It catalyses the reaction an N-acyl-D-glucosamine = an N-acyl-D-mannosamine. The protein operates within amino-sugar metabolism; N-acetylneuraminate degradation. Its function is as follows. Catalyzes the interconversion of N-acetylglucosamine to N-acetylmannosamine. Involved in the N-glycolylneuraminic acid (Neu5Gc) degradation pathway. The sequence is that of N-acylglucosamine 2-epimerase (Renbp) from Rattus norvegicus (Rat).